Reading from the N-terminus, the 238-residue chain is Purine nucleoside phosphorylase DeoD-type 1 (238 aa).

An a purine D-ribonucleoside-binding site is contributed by H5. Residues G21, R25, R44, and 88 to 91 (RVGS) contribute to the phosphate site. A purine D-ribonucleoside contacts are provided by residues 180–182 (EME) and 204–205 (SD). D205 functions as the Proton donor in the catalytic mechanism.

Belongs to the PNP/UDP phosphorylase family. As to quaternary structure, homohexamer; trimer of homodimers.

It catalyses the reaction a purine D-ribonucleoside + phosphate = a purine nucleobase + alpha-D-ribose 1-phosphate. The enzyme catalyses a purine 2'-deoxy-D-ribonucleoside + phosphate = a purine nucleobase + 2-deoxy-alpha-D-ribose 1-phosphate. Its function is as follows. Catalyzes the reversible phosphorolytic breakdown of the N-glycosidic bond in the beta-(deoxy)ribonucleoside molecules, with the formation of the corresponding free purine bases and pentose-1-phosphate. The polypeptide is Purine nucleoside phosphorylase DeoD-type 1 (Aliivibrio fischeri (strain ATCC 700601 / ES114) (Vibrio fischeri)).